The primary structure comprises 424 residues: Histidine--tRNA ligase (424 aa).

This sequence belongs to the class-II aminoacyl-tRNA synthetase family. As to quaternary structure, homodimer.

It is found in the cytoplasm. The catalysed reaction is tRNA(His) + L-histidine + ATP = L-histidyl-tRNA(His) + AMP + diphosphate + H(+). The polypeptide is Histidine--tRNA ligase (Escherichia coli O17:K52:H18 (strain UMN026 / ExPEC)).